We begin with the raw amino-acid sequence, 411 residues long: Prostaglandin E2 receptor EP3 subtype (411 aa).

Topologically, residues 1 to 49 (MKETRGDGGSAPFCTRLNHSYPGMWAPEARGNLTRPPGPGEDCGSVSVA) are extracellular. N-linked (GlcNAc...) asparagine glycosylation is found at N18 and N32. A helical membrane pass occupies residues 50–74 (FPITMLITGFVGNALAMLLVSRSYR). Residues 75–87 (RRESKRKKSFLLC) are Cytoplasmic-facing. A helical transmembrane segment spans residues 88–108 (IGWLALTDLVGQLLTSPVVIL). The Extracellular segment spans residues 109 to 127 (VYLSKQRWEQLDPSGRLCT). Cysteines 126 and 204 form a disulfide. The chain crosses the membrane as a helical span at residues 128–149 (FFGLTMTVFGLSSLFIASAMAV). Over 150 to 171 (ERALAIRAPHWYASHMKTRATR) the chain is Cytoplasmic. Residues 172–193 (AVLLGVWLAVLAFALLPVLGVG) form a helical membrane-spanning segment. Topologically, residues 194–223 (QYTIQWPGTWCFISTGRGDNGTSSSHNWGN) are extracellular. N213 carries N-linked (GlcNAc...) asparagine glycosylation. Residues 224–249 (LFFASTFAFLGLLALAITFTCNLATI) traverse the membrane as a helical segment. The Cytoplasmic portion of the chain corresponds to 250 to 279 (KALVSRCRAKAAASQSSAQWGRITTETAIQ). Residues 280-303 (LMGIMCVLSVCWSPLLIMMLKMIF) form a helical membrane-spanning segment. Residues 304-323 (NQTSVEHCKTDTGKQKECNF) are Extracellular-facing. Residues 324 to 345 (FLIAVRLASLNQILDPWVYLLL) traverse the membrane as a helical segment. The Cytoplasmic segment spans residues 346-411 (RKILLRKFCQ…ADPGARPYQQ (66 aa)). The span at 367 to 390 (IQRENRNVSHSGQHEEARDSEKSK) shows a compositional bias: basic and acidic residues. The segment at 367–392 (IQRENRNVSHSGQHEEARDSEKSKTI) is disordered.

The protein belongs to the G-protein coupled receptor 1 family. In terms of assembly, interacts (via C-terminus) with MKLN1. In the kidney cortex and medulla, adrenal gland and stomach. In kidney, expression is higher in tubules in the outer medulla, with lower levels in cortex. In kidney cortex, expression is restricted to distal tubules.

The protein resides in the cell membrane. Functionally, receptor for prostaglandin E2 (PGE2). Required for normal development of fever in response to pyrinogens, including IL1B, prostaglandin E2 and bacterial lipopolysaccharide (LPS). Required for normal potentiation of platelet aggregation by prostaglandin E2, and thus plays a role in the regulation of blood coagulation. Required for increased HCO3(-) secretion in the duodenum in response to mucosal acidification, and thereby contributes to the protection of the mucosa against acid-induced ulceration. Not required for normal kidney function, normal urine volume and osmolality. The polypeptide is Prostaglandin E2 receptor EP3 subtype (PTGER3) (Oryctolagus cuniculus (Rabbit)).